Consider the following 365-residue polypeptide: Protein dbl-1 (365 aa).

Positions 1–42 (MNDSVRTTTTISSTKSLVHSFQLSAILHLFLLISFTPMSAAA) are cleaved as a signal peptide. Residues 43 to 244 (DQHASHATRR…KRSAQTGNSE (202 aa)) constitute a propeptide that is removed on maturation. N-linked (GlcNAc...) asparagine glycans are attached at residues N110, N143, and N167. A disordered region spans residues 231–259 (SVRRKRSAQTGNSERKNRKKGRKHHNTEA). The segment covering 246-255 (KNRKKGRKHH) has biased composition (basic residues). Disulfide bonds link C264/C330, C293/C362, and C297/C364. N306 carries an N-linked (GlcNAc...) asparagine glycan.

The protein belongs to the TGF-beta family. As to quaternary structure, homodimer; disulfide-linked. Interacts with drag-1. In terms of tissue distribution, expressed in embryos just prior to hatching and remains constant in most cells throughout the larval and adult stages. Expressed by AVA command interneurons.

The protein localises to the secreted. Its function is as follows. Ligand for the serine/threonine-protein kinase receptor type-1 sma-6 which activates a TGF-beta-like signaling pathway. Multifunctional protein that is involved in body size, male ectodermal patterning, innate immunity, lipid metabolism and neural plasticity. Dose-dependent regulator of body size, probably influencing the sizes of some or all cells rather than their number. Plays a role in patterning of male-specific genital sensilla (simple sense organs), known as rays, and mating-associated structures, spicules. Plays a protective role in response to infection by the Gram-negative bacterium S.marcescens, by activating expression of genes involved in innate immunity. Regulator of lipid homeostasis, acting non cell-autonomously in the hypodermis; partly dependent on the Insulin/IGF-1-like signaling (IIS) mediated pathway. Required for aversive olfactory learning of pathogenic bacteria in adults. Involved in gland cell morphology, possibly via activation of a Smad-independent TGF-beta signaling pathway. Required to oppose the autoregulation of expression of Runt-related transcription factor rnt-1. The polypeptide is Protein dbl-1 (Caenorhabditis elegans).